We begin with the raw amino-acid sequence, 197 residues long: GTP cyclohydrolase 1 (197 aa).

Positions 88, 91, and 160 each coordinate Zn(2+).

The protein belongs to the GTP cyclohydrolase I family. As to quaternary structure, homomer.

The catalysed reaction is GTP + H2O = 7,8-dihydroneopterin 3'-triphosphate + formate + H(+). It participates in cofactor biosynthesis; 7,8-dihydroneopterin triphosphate biosynthesis; 7,8-dihydroneopterin triphosphate from GTP: step 1/1. The sequence is that of GTP cyclohydrolase 1 from Clostridium beijerinckii (strain ATCC 51743 / NCIMB 8052) (Clostridium acetobutylicum).